Consider the following 124-residue polypeptide: MLCPRAAFLVGSFHGVFPGPPASSHWEFWVPSTPVGAYFCPPQPQLTPPNTPKLVSEVEELYKSITALREKLLQAEQSLRNLKDIHMSLEKDVTAMTNSVFIDRQKCMAHRTCYPTILQLAGYQ.

The stretch at 54–96 (LVSEVEELYKSITALREKLLQAEQSLRNLKDIHMSLEKDVTAM) forms a coiled coil.

Belongs to the tektin family. Interacts with MIS18A. Interacts (via its coiled-coil region) with MAFF. As to expression, strongly expressed in brain, kidney and ovary. Moderately expressed in liver, spleen, thymus, prostate, testis, small intestine and colon. Weakly expressed in heart, placenta, lung and leukocytes.

It localises to the cytoplasm. The protein localises to the nucleus. It is found in the nucleolus. Its function is as follows. Acts as a coactivator of MAFF transcriptional activity. Inhibits cell growth and colony-forming efficiency. This Homo sapiens (Human) protein is MaFF-interacting protein (MAFIP).